The following is a 219-amino-acid chain: uncharacterized protein (219 aa).

Residues 57–158 (QLEHMTRAAM…LSEASRQTLL (102 aa)) form the HD domain.

This is an uncharacterized protein from Acanthamoeba polyphaga mimivirus (APMV).